Consider the following 389-residue polypeptide: 8-amino-7-oxononanoate synthase (389 aa).

Residue Arg-31 participates in substrate binding. 109–110 (GY) is a pyridoxal 5'-phosphate binding site. His-134 is a binding site for substrate. Pyridoxal 5'-phosphate contacts are provided by residues Ser-180, 205-208 (DEAH), and 236-239 (TLSK). Residue Lys-239 is modified to N6-(pyridoxal phosphate)lysine. Substrate is bound at residue Thr-349.

Belongs to the class-II pyridoxal-phosphate-dependent aminotransferase family. BioF subfamily. Homodimer. It depends on pyridoxal 5'-phosphate as a cofactor.

It carries out the reaction 6-carboxyhexanoyl-[ACP] + L-alanine + H(+) = (8S)-8-amino-7-oxononanoate + holo-[ACP] + CO2. It participates in cofactor biosynthesis; biotin biosynthesis. Its function is as follows. Catalyzes the decarboxylative condensation of pimeloyl-[acyl-carrier protein] and L-alanine to produce 8-amino-7-oxononanoate (AON), [acyl-carrier protein], and carbon dioxide. The sequence is that of 8-amino-7-oxononanoate synthase from Mycobacterium marinum (strain ATCC BAA-535 / M).